A 249-amino-acid chain; its full sequence is Triosephosphate isomerase (249 aa).

8–10 is a binding site for substrate; it reads NWK. Histidine 95 (electrophile) is an active-site residue. The active-site Proton acceptor is glutamate 163. Substrate is bound by residues glycine 169 and serine 209.

The protein belongs to the triosephosphate isomerase family. In terms of assembly, homodimer.

It is found in the cytoplasm. It catalyses the reaction D-glyceraldehyde 3-phosphate = dihydroxyacetone phosphate. It functions in the pathway carbohydrate biosynthesis; gluconeogenesis. Its pathway is carbohydrate degradation; glycolysis; D-glyceraldehyde 3-phosphate from glycerone phosphate: step 1/1. In terms of biological role, involved in the gluconeogenesis. Catalyzes stereospecifically the conversion of dihydroxyacetone phosphate (DHAP) to D-glyceraldehyde-3-phosphate (G3P). The sequence is that of Triosephosphate isomerase from Orientia tsutsugamushi (strain Boryong) (Rickettsia tsutsugamushi).